A 371-amino-acid chain; its full sequence is 4-hydroxy-3-methylbut-2-en-1-yl diphosphate synthase (flavodoxin) (371 aa).

The [4Fe-4S] cluster site is built by Cys-270, Cys-273, Cys-305, and Glu-312.

It belongs to the IspG family. [4Fe-4S] cluster is required as a cofactor.

It catalyses the reaction (2E)-4-hydroxy-3-methylbut-2-enyl diphosphate + oxidized [flavodoxin] + H2O + 2 H(+) = 2-C-methyl-D-erythritol 2,4-cyclic diphosphate + reduced [flavodoxin]. Its pathway is isoprenoid biosynthesis; isopentenyl diphosphate biosynthesis via DXP pathway; isopentenyl diphosphate from 1-deoxy-D-xylulose 5-phosphate: step 5/6. Its function is as follows. Converts 2C-methyl-D-erythritol 2,4-cyclodiphosphate (ME-2,4cPP) into 1-hydroxy-2-methyl-2-(E)-butenyl 4-diphosphate. The protein is 4-hydroxy-3-methylbut-2-en-1-yl diphosphate synthase (flavodoxin) of Shewanella sp. (strain ANA-3).